The chain runs to 1890 residues: Putative aminopeptidase-2 (1890 aa).

The first 20 residues, 1 to 20 (MRRKLLLLLCFIGLFSLIST), serve as a signal peptide directing secretion. An N-linked (GlcNAc...) asparagine glycan is attached at N110. Residues E220 and 354-358 (GAMEN) contribute to the substrate site. Position 390 (H390) interacts with Zn(2+). Catalysis depends on E391, which acts as the Proton acceptor. Positions 394 and 413 each coordinate Zn(2+). Residues N534, N581, N785, N803, N914, N1024, and N1094 are each glycosylated (N-linked (GlcNAc...) asparagine). Position 1143 (E1143) interacts with substrate. The N-linked (GlcNAc...) asparagine glycan is linked to N1245. 1280–1284 (GAMEN) provides a ligand contact to substrate. H1316 serves as a coordination point for Zn(2+). E1317 (proton acceptor) is an active-site residue. Residues H1320 and E1339 each contribute to the Zn(2+) site. 4 N-linked (GlcNAc...) asparagine glycosylation sites follow: N1451, N1521, N1826, and N1841.

It belongs to the peptidase M1 family. Zn(2+) is required as a cofactor.

Its function is as follows. Putative aminopeptidase which plays a role in oocyte maturation. This chain is Putative aminopeptidase-2, found in Caenorhabditis elegans.